The following is a 627-amino-acid chain: Endoglucanase 5 (627 aa).

Positions 1-26 (MRKFGGSLFGVSLLLSVLLAAATAAA) are cleaved as a signal peptide. The active-site Nucleophile is Asp-83. A glycan (N-linked (GlcNAc...) asparagine) is linked at Asn-196. Residue His-416 is part of the active site. Asn-465 carries N-linked (GlcNAc...) asparagine glycosylation. Residues Asp-468 and Glu-477 contribute to the active site. Asn-561 is a glycosylation site (N-linked (GlcNAc...) asparagine).

This sequence belongs to the glycosyl hydrolase 9 (cellulase E) family.

Its subcellular location is the secreted. The catalysed reaction is Endohydrolysis of (1-&gt;4)-beta-D-glucosidic linkages in cellulose, lichenin and cereal beta-D-glucans.. The protein is Endoglucanase 5 of Arabidopsis thaliana (Mouse-ear cress).